The sequence spans 488 residues: Capsid protein (488 aa).

Acidic residues predominate over residues 80–93; that stretch reads ISEDESDSGEEPEF. A disordered region spans residues 80–143; it reads ISEDESDSGE…QPKTIPGQKQ (64 aa). Basic and acidic residues predominate over residues 94–109; the sequence is EQVRMDRTGGTEIPKE. A Nuclear localization signal motif is present at residues 121–124; it reads RKRK. The segment covering 134–143 has biased composition (polar residues); the sequence is QPKTIPGQKQ. Residues 410 to 427 form a CCHC-type zinc finger; the sequence is CRCWICNIEGHYANECPN. Residues 463–488 are disordered; it reads YKEEEEETSTEESDDESSTSEDSDSD. Positions 464 to 488 are enriched in acidic residues; it reads KEEEEETSTEESDDESSTSEDSDSD.

It belongs to the caulimoviridae capsid protein family. In terms of assembly, interacts (via nuclear localization signal) with host importin alpha.

The protein resides in the virion. Its subcellular location is the host nucleus. Its function is as follows. Self assembles to form an icosahedral capsid, about 50 nm in diameter, nm, composed of 420 subunits of the viral capsid protein. The capsid encapsulates the genomic dsDNA. Following virus entry into host cell, provides nuclear import of the viral genome. Virus particles do not enter the nucleus, but dock at the nuclear membrane through the interaction with host importins. In Arabidopsis thaliana (Mouse-ear cress), this protein is Capsid protein.